Consider the following 419-residue polypeptide: Dual specificity protein phosphatase 7 (419 aa).

The segment at 1-47 is disordered; it reads MKNQLRGPPARAHMSTSGAAAAGGTRAGSEPGAGSGSGAGTGAGAAT. Residues 10 to 29 show a composition bias toward low complexity; that stretch reads ARAHMSTSGAAAAGGTRAGS. Positions 31-47 are enriched in gly residues; that stretch reads PGAGSGSGAGTGAGAAT. Residues 68–187 enclose the Rhodanese domain; that stretch reads GGASLLLLDC…FQTEYSEHCE (120 aa). A disordered region spans residues 216-240; sequence CSDGESDRELPSSATESDGSPVPSS. Over residues 227–240 the composition is skewed to polar residues; it reads SSATESDGSPVPSS. The region spanning 244-387 is the Tyrosine-protein phosphatase domain; it reads FPVQILPYLY…LLDFERTLGL (144 aa). Catalysis depends on cysteine 331, which acts as the Phosphocysteine intermediate. Position 331 to 337 (331 to 337) interacts with substrate; sequence CLAGISR.

This sequence belongs to the protein-tyrosine phosphatase family. Non-receptor class dual specificity subfamily. In terms of assembly, interacts with MAPK1/ERK2; the interaction enhances DUSP7 phosphatase activity. In terms of tissue distribution, strongly expressed in liver. Expressed at significantly higher levels in malignant hematopoietic cells than in corresponding non-malignant cells.

It is found in the cytoplasm. It catalyses the reaction O-phospho-L-tyrosyl-[protein] + H2O = L-tyrosyl-[protein] + phosphate. The enzyme catalyses O-phospho-L-seryl-[protein] + H2O = L-seryl-[protein] + phosphate. The catalysed reaction is O-phospho-L-threonyl-[protein] + H2O = L-threonyl-[protein] + phosphate. Strongly inhibited by sodium orthovanadate. Its function is as follows. Dual specificity protein phosphatase. Shows high activity towards MAPK1/ERK2. Also has lower activity towards MAPK14 and MAPK8. In arrested oocytes, plays a role in meiotic resumption. Promotes nuclear envelope breakdown and activation of the CDK1/Cyclin-B complex in oocytes, probably by dephosphorylating and inactivating the conventional protein kinase C (cPKC) isozyme PRKCB. May also inactivate PRKCA and/or PRKCG. Also important in oocytes for normal chromosome alignment on the metaphase plate and progression to anaphase, where it might regulate activity of the spindle-assembly checkpoint (SAC) complex. The protein is Dual specificity protein phosphatase 7 of Homo sapiens (Human).